The primary structure comprises 54 residues: uncharacterized protein (54 aa).

The segment at 1–54 (MWTLKARKEHTGISGKPTARTDRHGSTRSGDSELQASARRFSRLPDRCGAQGVT) is disordered.

This is an uncharacterized protein from Mycobacterium tuberculosis (strain ATCC 25618 / H37Rv).